The primary structure comprises 275 residues: Ribosomal RNA small subunit methyltransferase A (275 aa).

S-adenosyl-L-methionine is bound by residues Asn28, Leu30, Gly55, Glu77, Asp103, and Asn123.

The protein belongs to the class I-like SAM-binding methyltransferase superfamily. rRNA adenine N(6)-methyltransferase family. RsmA subfamily.

The protein resides in the cytoplasm. The catalysed reaction is adenosine(1518)/adenosine(1519) in 16S rRNA + 4 S-adenosyl-L-methionine = N(6)-dimethyladenosine(1518)/N(6)-dimethyladenosine(1519) in 16S rRNA + 4 S-adenosyl-L-homocysteine + 4 H(+). Functionally, specifically dimethylates two adjacent adenosines (A1518 and A1519) in the loop of a conserved hairpin near the 3'-end of 16S rRNA in the 30S particle. May play a critical role in biogenesis of 30S subunits. In Rhizobium johnstonii (strain DSM 114642 / LMG 32736 / 3841) (Rhizobium leguminosarum bv. viciae), this protein is Ribosomal RNA small subunit methyltransferase A.